The chain runs to 301 residues: Putative hydro-lyase C5H10.01 (301 aa).

Belongs to the D-glutamate cyclase family.

This is Putative hydro-lyase C5H10.01 from Schizosaccharomyces pombe (strain 972 / ATCC 24843) (Fission yeast).